Reading from the N-terminus, the 450-residue chain is Glucose-6-phosphate isomerase (450 aa).

The active-site Proton donor is Glu-290. Active-site residues include His-311 and Lys-425.

Belongs to the GPI family.

It is found in the cytoplasm. It catalyses the reaction alpha-D-glucose 6-phosphate = beta-D-fructose 6-phosphate. It participates in carbohydrate biosynthesis; gluconeogenesis. It functions in the pathway carbohydrate degradation; glycolysis; D-glyceraldehyde 3-phosphate and glycerone phosphate from D-glucose: step 2/4. Functionally, catalyzes the reversible isomerization of glucose-6-phosphate to fructose-6-phosphate. In Listeria innocua serovar 6a (strain ATCC BAA-680 / CLIP 11262), this protein is Glucose-6-phosphate isomerase.